The primary structure comprises 140 residues: MAAMTVHLDVVSAEQSLFSGRVESIQVTGSEGELGVNAGHAPLLTALKPGMVRLVKQFGEEEFIYIAGGTLEVQPNLVTVLADTAVRGEDLDEQAAEAAKRDAEAQMAKGASAELDYNQAAVQLAEAIAQLRIIQQLRKK.

It belongs to the ATPase epsilon chain family. In terms of assembly, F-type ATPases have 2 components, CF(1) - the catalytic core - and CF(0) - the membrane proton channel. CF(1) has five subunits: alpha(3), beta(3), gamma(1), delta(1), epsilon(1). CF(0) has three main subunits: a, b and c.

Its subcellular location is the cell inner membrane. Functionally, produces ATP from ADP in the presence of a proton gradient across the membrane. The polypeptide is ATP synthase epsilon chain (Pseudoalteromonas translucida (strain TAC 125)).